Here is a 275-residue protein sequence, read N- to C-terminus: Large ribosomal subunit protein uL2 (275 aa).

Residues 223–275 form a disordered region; it reads AAMNANDHPHGGGEAKAGQGNPHPVTPWGVPTKGYKTRKNKRTQQFIVRDRRG.

The protein belongs to the universal ribosomal protein uL2 family. As to quaternary structure, part of the 50S ribosomal subunit. Forms a bridge to the 30S subunit in the 70S ribosome.

One of the primary rRNA binding proteins. Required for association of the 30S and 50S subunits to form the 70S ribosome, for tRNA binding and peptide bond formation. It has been suggested to have peptidyltransferase activity; this is somewhat controversial. Makes several contacts with the 16S rRNA in the 70S ribosome. This is Large ribosomal subunit protein uL2 from Xanthomonas campestris pv. campestris (strain 8004).